The chain runs to 343 residues: Flap endonuclease 1 (343 aa).

The segment at 1–98 is N-domain; the sequence is MGVPIGELIP…KELEKRREAR (98 aa). Mg(2+) is bound by residues D27, D80, E152, E154, D173, D175, and D236. The segment at 116–258 is I-domain; sequence EARKYAQRAT…KALEIVKYSK (143 aa). Residues 330-338 are interaction with PCNA; the sequence is KQSTLESWF.

It belongs to the XPG/RAD2 endonuclease family. FEN1 subfamily. In terms of assembly, interacts with PCNA. PCNA stimulates the nuclease activity without altering cleavage specificity. Mg(2+) is required as a cofactor.

Its function is as follows. Structure-specific nuclease with 5'-flap endonuclease and 5'-3' exonuclease activities involved in DNA replication and repair. During DNA replication, cleaves the 5'-overhanging flap structure that is generated by displacement synthesis when DNA polymerase encounters the 5'-end of a downstream Okazaki fragment. Binds the unpaired 3'-DNA end and kinks the DNA to facilitate 5' cleavage specificity. Cleaves one nucleotide into the double-stranded DNA from the junction in flap DNA, leaving a nick for ligation. Also involved in the base excision repair (BER) pathway. Acts as a genome stabilization factor that prevents flaps from equilibrating into structures that lead to duplications and deletions. Also possesses 5'-3' exonuclease activity on nicked or gapped double-stranded DNA. In Pyrococcus abyssi (strain GE5 / Orsay), this protein is Flap endonuclease 1.